A 1033-amino-acid polypeptide reads, in one-letter code: Translation initiation factor IF-2 (1033 aa).

The segment at 49 to 432 (AFQQGGGNGR…APSVGGVMLP (384 aa)) is disordered. Positions 59 to 113 (SAGRPAAPKKAAPRPSAPSPAQAGPSQAAPAAGDRAAAPRPSAAPKAPAAQQPAA) are enriched in low complexity. Pro residues-rich tracts occupy residues 114-140 (PSAPAPAPSQGPRPTPGPKPAPRPAPA) and 148-164 (PAAPAAPSTPAPAPSGP). Over residues 171-189 (PGAPKPGGARPSGPGQDRG) the composition is skewed to low complexity. Gly residues predominate over residues 190–201 (QQGGQGRPGGQR). The segment covering 236–246 (APRPQGGPRPG) has biased composition (pro residues). Over residues 247–268 (GPGGAPGGGPRPQGPGGQGGGP) the composition is skewed to gly residues. Residues 305–314 (MMPQRPAAGP) are compositionally biased toward low complexity. Over residues 318–401 (PGGGGRGPGG…GTQGAFGRPG (84 aa)) the composition is skewed to gly residues. Over residues 405–414 (RRGRKSKRQR) the composition is skewed to basic residues. The tr-type G domain occupies 526–698 (VRPPVVTVMG…VVLTADASLD (173 aa)). Positions 535–542 (GHVDHGKT) are G1. GTP is bound at residue 535–542 (GHVDHGKT). The G2 stretch occupies residues 560 to 564 (GITQH). Positions 585 to 588 (DTPG) are G3. GTP-binding positions include 585–589 (DTPGH) and 639–642 (NKID). The interval 639–642 (NKID) is G4. A G5 region spans residues 675 to 677 (SAK).

The protein belongs to the TRAFAC class translation factor GTPase superfamily. Classic translation factor GTPase family. IF-2 subfamily.

It localises to the cytoplasm. Its function is as follows. One of the essential components for the initiation of protein synthesis. Protects formylmethionyl-tRNA from spontaneous hydrolysis and promotes its binding to the 30S ribosomal subunits. Also involved in the hydrolysis of GTP during the formation of the 70S ribosomal complex. The chain is Translation initiation factor IF-2 from Streptomyces coelicolor (strain ATCC BAA-471 / A3(2) / M145).